Here is a 400-residue protein sequence, read N- to C-terminus: Probable splicing factor YJU2B (400 aa).

The segment at 1 to 26 (MGERKGVNKYYPPDFNPEKHGSLNRY) is disordered. The residue at position 40 (Ser-40) is a Phosphoserine. The stretch at 182-214 (LNSMLRKRFREKKKAMQEEEERDQALQAKASLA) forms a coiled coil. The interval 255–400 (WFPSTPGASA…VADYSGSESE (146 aa)) is disordered. Over residues 283 to 292 (RRATPTSSPV) the composition is skewed to polar residues. Ser-310 bears the Phosphoserine mark. The span at 327 to 341 (EGTNQNRPVSPQDCS) shows a compositional bias: polar residues. Residues 364-380 (PQPPPDTSPEAPNPQDT) show a composition bias toward pro residues.

The protein belongs to the CWC16 family.

It localises to the nucleus. Functionally, may be involved in mRNA splicing. The chain is Probable splicing factor YJU2B (YJU2B) from Bos taurus (Bovine).